Here is a 337-residue protein sequence, read N- to C-terminus: MRVLGIETSCDETGIAIYDDEKGLLANQLYSQVKLHADYGGVVPELASRDHVRKTVPLIQEALKESGLTAKDIDAVAYTAGPGLVGALLVGATVGRSLAFAWDVPAIPVHHMEGHLLAPMLEDNPPAFPFVALLVSGGHTQLISVTGIGQYELLGESIDDAAGEAFDKTAKLLGLDYPGGPLLSKMAAQGTAGRFVFPRPMTDRPGLDFSFSGLKTFAANTIRDNGTDDQTRADIARAFEDAVVDTLMIKCKRALDQTGFKRLVMAGGVSANRTLRAKLAEMMKKRRGEVFYARPEFCTDNGAMIAYAGMVRFKAGATADLGVSVRPRWPLAELPAA.

His111 and His115 together coordinate Fe cation. Substrate contacts are provided by residues 134–138, Asp167, Gly180, and Asn272; that span reads LVSGG. Asp300 contributes to the Fe cation binding site.

This sequence belongs to the KAE1 / TsaD family. Fe(2+) serves as cofactor.

It localises to the cytoplasm. It catalyses the reaction L-threonylcarbamoyladenylate + adenosine(37) in tRNA = N(6)-L-threonylcarbamoyladenosine(37) in tRNA + AMP + H(+). Functionally, required for the formation of a threonylcarbamoyl group on adenosine at position 37 (t(6)A37) in tRNAs that read codons beginning with adenine. Is involved in the transfer of the threonylcarbamoyl moiety of threonylcarbamoyl-AMP (TC-AMP) to the N6 group of A37, together with TsaE and TsaB. TsaD likely plays a direct catalytic role in this reaction. This is tRNA N6-adenosine threonylcarbamoyltransferase from Escherichia coli (strain SMS-3-5 / SECEC).